A 434-amino-acid polypeptide reads, in one-letter code: MDKLIIVGGVPLNGSIRISGAKNAVLPILAATLLIEEPVILSNIPHLNDVTTMIELLGRMGAQITIDERMSIEVDCSQIQNVHASYELVKTMRASILVLGPLLSRFGKAEVSLPGGCAIGSRPVDVHIDGMRALGADIELVDGFIHATVEGRLKGAELNLGKITVTGTENLIMAATLAEGQTIIHNAACEPEVQDLANFLNKMGARISGAGTDTIVIDGVDRLSGGSYSILPDRIEAGTYLVAAAMTRGHVRIRDVFPKTLGAVLEKLHEAGARVKIGENWVDLDMQGRRAKAVDIVTAPYPEMPTDMQAQFMALNVVAEGQAVITETVFENRFMHVHELQRMGADIKLQGSKALIRGKEKLTGAPVMATDLRASAGLVLAGLMARGNTIVDRIYHIDRGYECIEEKLAQLGAEIRRVSSHVYAARYAAQKRWL.

22 to 23 (KN) lines the phosphoenolpyruvate pocket. UDP-N-acetyl-alpha-D-glucosamine is bound at residue arginine 93. The active-site Proton donor is the cysteine 117. Cysteine 117 is subject to 2-(S-cysteinyl)pyruvic acid O-phosphothioketal. UDP-N-acetyl-alpha-D-glucosamine is bound by residues aspartate 307 and valine 329.

This sequence belongs to the EPSP synthase family. MurA subfamily.

It localises to the cytoplasm. The catalysed reaction is phosphoenolpyruvate + UDP-N-acetyl-alpha-D-glucosamine = UDP-N-acetyl-3-O-(1-carboxyvinyl)-alpha-D-glucosamine + phosphate. It functions in the pathway cell wall biogenesis; peptidoglycan biosynthesis. Functionally, cell wall formation. Adds enolpyruvyl to UDP-N-acetylglucosamine. This chain is UDP-N-acetylglucosamine 1-carboxyvinyltransferase, found in Coxiella burnetii (strain CbuG_Q212) (Coxiella burnetii (strain Q212)).